Consider the following 95-residue polypeptide: Aspartyl/glutamyl-tRNA(Asn/Gln) amidotransferase subunit C (95 aa).

The protein belongs to the GatC family. As to quaternary structure, heterotrimer of A, B and C subunits.

It catalyses the reaction L-glutamyl-tRNA(Gln) + L-glutamine + ATP + H2O = L-glutaminyl-tRNA(Gln) + L-glutamate + ADP + phosphate + H(+). The enzyme catalyses L-aspartyl-tRNA(Asn) + L-glutamine + ATP + H2O = L-asparaginyl-tRNA(Asn) + L-glutamate + ADP + phosphate + 2 H(+). Its function is as follows. Allows the formation of correctly charged Asn-tRNA(Asn) or Gln-tRNA(Gln) through the transamidation of misacylated Asp-tRNA(Asn) or Glu-tRNA(Gln) in organisms which lack either or both of asparaginyl-tRNA or glutaminyl-tRNA synthetases. The reaction takes place in the presence of glutamine and ATP through an activated phospho-Asp-tRNA(Asn) or phospho-Glu-tRNA(Gln). The chain is Aspartyl/glutamyl-tRNA(Asn/Gln) amidotransferase subunit C from Halothermothrix orenii (strain H 168 / OCM 544 / DSM 9562).